The chain runs to 357 residues: Uroporphyrinogen decarboxylase (357 aa).

Substrate contacts are provided by residues 34–38 (RQAGR), D83, Y158, S213, and H336.

Belongs to the uroporphyrinogen decarboxylase family. As to quaternary structure, homodimer.

Its subcellular location is the cytoplasm. The catalysed reaction is uroporphyrinogen III + 4 H(+) = coproporphyrinogen III + 4 CO2. It functions in the pathway porphyrin-containing compound metabolism; protoporphyrin-IX biosynthesis; coproporphyrinogen-III from 5-aminolevulinate: step 4/4. Its function is as follows. Catalyzes the decarboxylation of four acetate groups of uroporphyrinogen-III to yield coproporphyrinogen-III. The sequence is that of Uroporphyrinogen decarboxylase from Mycolicibacterium paratuberculosis (strain ATCC BAA-968 / K-10) (Mycobacterium paratuberculosis).